Here is a 122-residue protein sequence, read N- to C-terminus: Large ribosomal subunit protein uL14 (122 aa).

The protein belongs to the universal ribosomal protein uL14 family. Part of the 50S ribosomal subunit. Forms a cluster with proteins L3 and L19. In the 70S ribosome, L14 and L19 interact and together make contacts with the 16S rRNA in bridges B5 and B8.

In terms of biological role, binds to 23S rRNA. Forms part of two intersubunit bridges in the 70S ribosome. The polypeptide is Large ribosomal subunit protein uL14 (Bordetella avium (strain 197N)).